The following is a 176-amino-acid chain: Large ribosomal subunit protein uL6 (176 aa).

It belongs to the universal ribosomal protein uL6 family. As to quaternary structure, part of the 50S ribosomal subunit.

Its function is as follows. This protein binds to the 23S rRNA, and is important in its secondary structure. It is located near the subunit interface in the base of the L7/L12 stalk, and near the tRNA binding site of the peptidyltransferase center. This chain is Large ribosomal subunit protein uL6, found in Burkholderia lata (strain ATCC 17760 / DSM 23089 / LMG 22485 / NCIMB 9086 / R18194 / 383).